A 362-amino-acid chain; its full sequence is GTPase Obg (362 aa).

The 159-residue stretch at 1–159 (MKFIDEARIE…RKLKLELKVL (159 aa)) folds into the Obg domain. Residues 129–148 (HFKSSTNRAPRQKTNGKEGE) are disordered. Polar residues predominate over residues 130–141 (FKSSTNRAPRQK). The OBG-type G domain maps to 160–334 (ADVGLLGMPN…LCYALQDYLD (175 aa)). GTP contacts are provided by residues 166 to 173 (GMPNAGKS), 191 to 195 (FTTLH), 213 to 216 (DIPG), 284 to 287 (NKVD), and 315 to 317 (SAL). The Mg(2+) site is built by S173 and T193. Residues 340-362 (RDDAEERAADPRYQDQAADKSPD) are disordered.

The protein belongs to the TRAFAC class OBG-HflX-like GTPase superfamily. OBG GTPase family. Monomer. The cofactor is Mg(2+).

The protein resides in the cytoplasm. In terms of biological role, an essential GTPase which binds GTP, GDP and possibly (p)ppGpp with moderate affinity, with high nucleotide exchange rates and a fairly low GTP hydrolysis rate. Plays a role in control of the cell cycle, stress response, ribosome biogenesis and in those bacteria that undergo differentiation, in morphogenesis control. The protein is GTPase Obg of Polynucleobacter asymbioticus (strain DSM 18221 / CIP 109841 / QLW-P1DMWA-1) (Polynucleobacter necessarius subsp. asymbioticus).